The sequence spans 311 residues: tRNA dimethylallyltransferase (311 aa).

Residue G13–T20 participates in ATP binding. Substrate is bound at residue T15–T20. Interaction with substrate tRNA regions lie at residues D38–Q41 and Q166–R170.

The protein belongs to the IPP transferase family. In terms of assembly, monomer. Mg(2+) serves as cofactor.

The enzyme catalyses adenosine(37) in tRNA + dimethylallyl diphosphate = N(6)-dimethylallyladenosine(37) in tRNA + diphosphate. In terms of biological role, catalyzes the transfer of a dimethylallyl group onto the adenine at position 37 in tRNAs that read codons beginning with uridine, leading to the formation of N6-(dimethylallyl)adenosine (i(6)A). The chain is tRNA dimethylallyltransferase from Staphylococcus aureus (strain MRSA252).